The chain runs to 89 residues: Small ribosomal subunit protein uS15 (89 aa).

This sequence belongs to the universal ribosomal protein uS15 family. As to quaternary structure, part of the 30S ribosomal subunit. Forms a bridge to the 50S subunit in the 70S ribosome, contacting the 23S rRNA.

In terms of biological role, one of the primary rRNA binding proteins, it binds directly to 16S rRNA where it helps nucleate assembly of the platform of the 30S subunit by binding and bridging several RNA helices of the 16S rRNA. Forms an intersubunit bridge (bridge B4) with the 23S rRNA of the 50S subunit in the ribosome. In Alcanivorax borkumensis (strain ATCC 700651 / DSM 11573 / NCIMB 13689 / SK2), this protein is Small ribosomal subunit protein uS15.